The primary structure comprises 242 residues: DNA repair protein RecO (242 aa).

Belongs to the RecO family. In terms of assembly, monomer.

In terms of biological role, involved in DNA repair and RecF pathway recombination. The sequence is that of DNA repair protein RecO from Shigella flexneri serotype 5b (strain 8401).